Here is a 327-residue protein sequence, read N- to C-terminus: MTITLTENKRKSMEKLSVDGVISALAFDQRGALKRMMAQHQTKEPTVEQIEELKSLVSEELTPFASSILLDPEYGLPASRVRSEEAGLLLAYEKTGYDATTTSRLPDCLDVWSAKRIKEAGAEAVKFLIYYDIDGGQDVNEQKKAYIERIGSECRAEDIPFYLEILTYDEKIADNASPEFAKVKAHKVNEAMKVFSKERFGVDVLKVEVPVNMKFVEGFADGEILFTKEEAAQAFRDQEASTDLPYIYLSAGVSAKLFQDTLVFAAESGAKFNGVLCGRATWAGSVKVYIEEGPQAAREWLRTEGFKNIDELNKVLDKTASPWTEKM.

The protein belongs to the aldolase LacD family.

It catalyses the reaction D-tagatofuranose 1,6-bisphosphate = D-glyceraldehyde 3-phosphate + dihydroxyacetone phosphate. It functions in the pathway carbohydrate metabolism; D-tagatose 6-phosphate degradation; D-glyceraldehyde 3-phosphate and glycerone phosphate from D-tagatose 6-phosphate: step 2/2. This is Tagatose 1,6-diphosphate aldolase 2 (lacD2) from Streptococcus pyogenes serotype M3 (strain ATCC BAA-595 / MGAS315).